The chain runs to 161 residues: Nucleotide-binding protein PFLU_4927 (161 aa).

The protein belongs to the YajQ family.

In terms of biological role, nucleotide-binding protein. This is Nucleotide-binding protein PFLU_4927 from Pseudomonas fluorescens (strain SBW25).